Here is a 445-residue protein sequence, read N- to C-terminus: Trigger factor (445 aa).

Residues 168–253 (GDAVIVDFVG…IHEVRAPQTP (86 aa)) enclose the PPIase FKBP-type domain.

Belongs to the FKBP-type PPIase family. Tig subfamily.

The protein localises to the cytoplasm. The catalysed reaction is [protein]-peptidylproline (omega=180) = [protein]-peptidylproline (omega=0). Its function is as follows. Involved in protein export. Acts as a chaperone by maintaining the newly synthesized protein in an open conformation. Functions as a peptidyl-prolyl cis-trans isomerase. This is Trigger factor from Hyphomonas neptunium (strain ATCC 15444).